The sequence spans 80 residues: Exodeoxyribonuclease 7 small subunit (80 aa).

This sequence belongs to the XseB family. As to quaternary structure, heterooligomer composed of large and small subunits.

It is found in the cytoplasm. The enzyme catalyses Exonucleolytic cleavage in either 5'- to 3'- or 3'- to 5'-direction to yield nucleoside 5'-phosphates.. Bidirectionally degrades single-stranded DNA into large acid-insoluble oligonucleotides, which are then degraded further into small acid-soluble oligonucleotides. The protein is Exodeoxyribonuclease 7 small subunit of Vibrio vulnificus (strain CMCP6).